A 154-amino-acid chain; its full sequence is Ribosome maturation factor RimP (154 aa).

The protein belongs to the RimP family.

It localises to the cytoplasm. In terms of biological role, required for maturation of 30S ribosomal subunits. This is Ribosome maturation factor RimP from Clostridium novyi (strain NT).